Reading from the N-terminus, the 747-residue chain is Polyribonucleotide nucleotidyltransferase (747 aa).

The Mg(2+) site is built by aspartate 487 and aspartate 493. Residues 554 to 613 form the KH domain; sequence PSTTTIKIDKDKIRDVIGPGGKVIKEICETSDAKIDISDDGTVSVYASDRDKLKVALDKI. The S1 motif domain maps to 623 to 691; that stretch reads GEIFNGTVMK…NKGKAKLTIK (69 aa). The interval 691–747 is disordered; that stretch reads KNADKDKSSNNPKQKNNVNNSKENSEPERRDSSKKRAWNEDNNSDTTEVITERKYFN. Low complexity predominate over residues 699–712; it reads SNNPKQKNNVNNSK. A compositionally biased stretch (polar residues) spans 730 to 739; sequence EDNNSDTTEV.

The protein belongs to the polyribonucleotide nucleotidyltransferase family. The cofactor is Mg(2+).

Its subcellular location is the cytoplasm. The enzyme catalyses RNA(n+1) + phosphate = RNA(n) + a ribonucleoside 5'-diphosphate. Functionally, involved in mRNA degradation. Catalyzes the phosphorolysis of single-stranded polyribonucleotides processively in the 3'- to 5'-direction. The chain is Polyribonucleotide nucleotidyltransferase from Rickettsia akari (strain Hartford).